We begin with the raw amino-acid sequence, 209 residues long: Ribosomal RNA small subunit methyltransferase G (209 aa).

Residues Gly71, Phe76, 122-123 (AE), and Arg135 each bind S-adenosyl-L-methionine.

This sequence belongs to the methyltransferase superfamily. RNA methyltransferase RsmG family.

Its subcellular location is the cytoplasm. Functionally, specifically methylates the N7 position of a guanine in 16S rRNA. This chain is Ribosomal RNA small subunit methyltransferase G, found in Flavobacterium johnsoniae (strain ATCC 17061 / DSM 2064 / JCM 8514 / BCRC 14874 / CCUG 350202 / NBRC 14942 / NCIMB 11054 / UW101) (Cytophaga johnsonae).